The following is a 545-amino-acid chain: T-complex protein 1 subunit gamma (545 aa).

Met-1 is subject to N-acetylmethionine. The tract at residues 1 to 24 is disordered; that stretch reads MMGHRPVLVLSQNTKRESGRKVQS. Position 11 is a phosphoserine (Ser-11). A Glycyl lysine isopeptide (Lys-Gly) (interchain with G-Cter in SUMO2) cross-link involves residue Lys-15. Residue Gly-42 participates in ADP binding. Residue Gly-42 participates in ATP binding. Asp-93 is a Mg(2+) binding site. ADP-binding residues include Gly-94, Thr-95, Thr-96, Ser-97, Thr-162, and Lys-163. Residues Gly-94, Thr-95, and Thr-96 each contribute to the ATP site. At Ser-170 the chain carries Phosphoserine. Position 222 is an N6-acetyllysine (Lys-222). A phosphoserine mark is found at Ser-243 and Ser-244. Position 247 is a phosphotyrosine (Tyr-247). Residues Lys-248 and Lys-249 each participate in a glycyl lysine isopeptide (Lys-Gly) (interchain with G-Cter in SUMO2) cross-link. Ser-252 is modified (phosphoserine). Cysteines 366 and 372 form a disulfide. Lys-381 is covalently cross-linked (Glycyl lysine isopeptide (Lys-Gly) (interchain with G-Cter in SUMO2)). Gly-411 is a binding site for ADP. An ATP-binding site is contributed by Gly-411. Phosphothreonine is present on residues Thr-430 and Thr-459. ADP contacts are provided by Gly-482, Glu-483, Glu-497, and Lys-502. Gly-482 lines the ATP pocket. Glu-497 contacts ATP. Residues 526–545 are disordered; that stretch reads HKKKGDDQSRQGGAPDAGQE.

It belongs to the TCP-1 chaperonin family. In terms of assembly, component of the chaperonin-containing T-complex (TRiC), a hexadecamer composed of two identical back-to-back stacked rings enclosing a protein folding chamber. Each ring is made up of eight different subunits: TCP1/CCT1, CCT2, CCT3, CCT4, CCT5, CCT6A/CCT6, CCT7, CCT8. Interacts with PACRG. Interacts with DNAAF4. Interacts with DLEC1.

Its subcellular location is the cytoplasm. It catalyses the reaction ATP + H2O = ADP + phosphate + H(+). Its function is as follows. Component of the chaperonin-containing T-complex (TRiC), a molecular chaperone complex that assists the folding of actin, tubulin and other proteins upon ATP hydrolysis. The TRiC complex mediates the folding of WRAP53/TCAB1, thereby regulating telomere maintenance. As part of the TRiC complex may play a role in the assembly of BBSome, a complex involved in ciliogenesis regulating transports vesicles to the cilia. This chain is T-complex protein 1 subunit gamma (CCT3), found in Pongo abelii (Sumatran orangutan).